The following is a 188-amino-acid chain: Elongation factor P (188 aa).

At Lys34 the chain carries N6-(3,6-diaminohexanoyl)-5-hydroxylysine.

The protein belongs to the elongation factor P family. May be beta-lysylated on the epsilon-amino group of Lys-34 by the combined action of EpmA and EpmB, and then hydroxylated on the C5 position of the same residue by EpmC (if this protein is present). Lysylation is critical for the stimulatory effect of EF-P on peptide-bond formation. The lysylation moiety may extend toward the peptidyltransferase center and stabilize the terminal 3-CCA end of the tRNA. Hydroxylation of the C5 position on Lys-34 may allow additional potential stabilizing hydrogen-bond interactions with the P-tRNA.

The protein localises to the cytoplasm. Its pathway is protein biosynthesis; polypeptide chain elongation. Its function is as follows. Involved in peptide bond synthesis. Alleviates ribosome stalling that occurs when 3 or more consecutive Pro residues or the sequence PPG is present in a protein, possibly by augmenting the peptidyl transferase activity of the ribosome. Modification of Lys-34 is required for alleviation. The protein is Elongation factor P of Xylella fastidiosa (strain M23).